Consider the following 1723-residue polypeptide: Lys-gingipain (1723 aa).

A signal peptide spans 1–24 (MRKLLLLIAASLLGVGLYAQSAKI). Residues 25–228 (KLDAPTTRTT…ETAYKQLFNR (204 aa)) constitute a propeptide that is removed on maturation. Residues Asp313, Asp337, Asp339, Phe341, and Glu343 each contribute to the Ca(2+) site. Residue His444 is the Proton donor of the active site. Cys477 functions as the Nucleophile in the catalytic mechanism. The Ca(2+) site is built by Phe482 and Glu491. The segment at 964–985 (WDAPNGTPNPNPNPNPGTTTLS) is disordered. Residues Ser987, Glu989, Asp1000, Asp1002, Asp1004, His1006, Ser1021, Gly1023, Asn1042, Asp1145, Glu1146, Asp1430, Glu1432, Asp1444, Asp1446, Asp1448, Asn1450, Ser1480, Asn1495, and Asp1585 each coordinate Ca(2+).

Belongs to the peptidase C25 family. Proteolytically cleaved into a catalytic subunit and three adhesins. Arg-gingipain is involved in this post-translational processing.

It is found in the secreted. It catalyses the reaction Endopeptidase with strict specificity for lysyl bonds.. Activated by the thiol-reducing agents cysteine, 2-mercaptoethanol and dithiothreitol. Inhibited by iodacetamide, iodoacetic acid, leupeptin, tosyl-L-lysine and tosyl-L-phenylalanine. Not inhibited by elastatinal, chymostatin, cystatins, alpha1-antichymotrypsin or the serine protease inhibitors phenylmethylsulfonyl fluoride and diisopropylfluorophosphate. Not inhibited by metal ion chelators. Inhibited by the heavy metal ions Fe(3+), Zn(2+), Cu(2+) and Mn(2+). Cysteine proteinase with a strong preference for substrates with Lys in the P1 position. Hydrolyzes bovine hemoglobin, bovine serum albumin, casein, human placental type I collagen and human IgA and IgG. Disrupts the functions of polymorphonuclear leukocytes. May act as a virulence factor in the development of peridontal disease. Involved in the coaggregation of P.gingivalis with other oral bacteria. This is Lys-gingipain from Porphyromonas gingivalis (strain ATCC 33277 / DSM 20709 / CIP 103683 / JCM 12257 / NCTC 11834 / 2561).